The following is a 614-amino-acid chain: 4-hydroxy-3-methylbut-2-en-1-yl diphosphate synthase (flavodoxin) (614 aa).

Cys-522, Cys-525, Cys-556, and Glu-563 together coordinate [4Fe-4S] cluster.

This sequence belongs to the IspG family. [4Fe-4S] cluster is required as a cofactor.

It carries out the reaction (2E)-4-hydroxy-3-methylbut-2-enyl diphosphate + oxidized [flavodoxin] + H2O + 2 H(+) = 2-C-methyl-D-erythritol 2,4-cyclic diphosphate + reduced [flavodoxin]. It participates in isoprenoid biosynthesis; isopentenyl diphosphate biosynthesis via DXP pathway; isopentenyl diphosphate from 1-deoxy-D-xylulose 5-phosphate: step 5/6. Functionally, converts 2C-methyl-D-erythritol 2,4-cyclodiphosphate (ME-2,4cPP) into 1-hydroxy-2-methyl-2-(E)-butenyl 4-diphosphate. This chain is 4-hydroxy-3-methylbut-2-en-1-yl diphosphate synthase (flavodoxin), found in Phocaeicola vulgatus (strain ATCC 8482 / DSM 1447 / JCM 5826 / CCUG 4940 / NBRC 14291 / NCTC 11154) (Bacteroides vulgatus).